We begin with the raw amino-acid sequence, 131 residues long: Arsenate reductase (131 aa).

Active-site nucleophile residues include Cys10, Cys82, and Cys89. Disulfide bonds link Cys10–Cys82 and Cys82–Cys89.

It belongs to the low molecular weight phosphotyrosine protein phosphatase family. Thioredoxin-coupled ArsC subfamily.

It localises to the cytoplasm. The enzyme catalyses arsenate + [thioredoxin]-dithiol + H(+) = arsenite + [thioredoxin]-disulfide + H2O. In terms of biological role, catalyzes the reduction of arsenate [As(V)] to arsenite [As(III)]. The sequence is that of Arsenate reductase from Staphylococcus aureus (strain N315).